We begin with the raw amino-acid sequence, 143 residues long: Nucleoside diphosphate kinase (143 aa).

Positions 11, 59, 87, 93, 104, and 114 each coordinate ATP. The active-site Pros-phosphohistidine intermediate is His-117.

This sequence belongs to the NDK family. Homotetramer. It depends on Mg(2+) as a cofactor.

The protein resides in the cytoplasm. It carries out the reaction a 2'-deoxyribonucleoside 5'-diphosphate + ATP = a 2'-deoxyribonucleoside 5'-triphosphate + ADP. The enzyme catalyses a ribonucleoside 5'-diphosphate + ATP = a ribonucleoside 5'-triphosphate + ADP. Its function is as follows. Major role in the synthesis of nucleoside triphosphates other than ATP. The ATP gamma phosphate is transferred to the NDP beta phosphate via a ping-pong mechanism, using a phosphorylated active-site intermediate. The sequence is that of Nucleoside diphosphate kinase from Clostridium perfringens (strain SM101 / Type A).